The chain runs to 30 residues: Photosystem I reaction center subunit XII (30 aa).

The chain crosses the membrane as a helical span at residues 7–26 (IFVALLFALVSAVLAIRLGK).

It belongs to the PsaM family.

Its subcellular location is the plastid. It localises to the chloroplast thylakoid membrane. The sequence is that of Photosystem I reaction center subunit XII from Porphyra purpurea (Red seaweed).